Consider the following 187-residue polypeptide: Ribosome-recycling factor (187 aa).

Belongs to the RRF family.

It localises to the cytoplasm. In terms of biological role, responsible for the release of ribosomes from messenger RNA at the termination of protein biosynthesis. May increase the efficiency of translation by recycling ribosomes from one round of translation to another. The protein is Ribosome-recycling factor of Nitrosococcus oceani (strain ATCC 19707 / BCRC 17464 / JCM 30415 / NCIMB 11848 / C-107).